The chain runs to 99 residues: Large ribosomal subunit protein uL23 (99 aa).

This sequence belongs to the universal ribosomal protein uL23 family. As to quaternary structure, part of the 50S ribosomal subunit. Contacts protein L29, and trigger factor when it is bound to the ribosome.

Its function is as follows. One of the early assembly proteins it binds 23S rRNA. One of the proteins that surrounds the polypeptide exit tunnel on the outside of the ribosome. Forms the main docking site for trigger factor binding to the ribosome. This chain is Large ribosomal subunit protein uL23, found in Shewanella sediminis (strain HAW-EB3).